The following is a 613-amino-acid chain: Laccase 1 (613 aa).

The first 20 residues, 1 to 20 (MSRFARLLLIVALFFTGAWA), serve as a signal peptide directing secretion. Plastocyanin-like domains are found at residues 29–142 (ITWK…IRPK) and 171–359 (YLVV…MRIP). N-linked (GlcNAc...) asparagine glycosylation is present at Asn74. Cu cation is bound by residues His78, His80, His122, and His124. N-linked (GlcNAc...) asparagine glycosylation is found at Asn256, Asn279, Asn444, Asn468, and Asn484. Positions 468–598 (NATRDTENDG…GGMGIAILDG (131 aa)) constitute a Plastocyanin-like 3 domain. Residues His506, His509, and His511 each contribute to the Cu cation site. Asn526 carries an N-linked (GlcNAc...) asparagine glycan. The Cu cation site is built by His580, Cys581, His582, and His586.

The protein belongs to the multicopper oxidase family. It depends on Cu cation as a cofactor.

It localises to the cell surface. Its pathway is pigment biosynthesis. In terms of biological role, laccase; part of the Pks1 gene cluster that mediates the biosynthesis of an anthraquinone derivative pigment that contributes to conidial pigmentation that provides protection from UV radiation, heat and cold stress. The polyketide synthase Pks1 produces 1-acetyl-2,4,6,8-tetrahydroxy-9,10-anthraquinone though condensation of acetyl-CoA with malonyl-CoA. The dehydratase EthD and the laccase Mlac1 further convert the anthraquinone derivative into the final conidial pigment. In Metarhizium guizhouense (strain ARSEF 977), this protein is Laccase 1.